The sequence spans 297 residues: uncharacterized protein (297 aa).

Residues 1–29 (MAESKAKNMFQKLSLTPKRNHEHDAGRNI) are disordered. The span at 19-29 (RNHEHDAGRNI) shows a compositional bias: basic and acidic residues.

This is an uncharacterized protein from Caenorhabditis elegans.